The chain runs to 79 residues: Small ribosomal subunit protein bS18 (79 aa).

The protein belongs to the bacterial ribosomal protein bS18 family. Part of the 30S ribosomal subunit. Forms a tight heterodimer with protein bS6.

In terms of biological role, binds as a heterodimer with protein bS6 to the central domain of the 16S rRNA, where it helps stabilize the platform of the 30S subunit. This is Small ribosomal subunit protein bS18 from Streptococcus suis (strain 98HAH33).